The primary structure comprises 197 residues: MSIIWVCGVDEAGRGPLVGAVVAGAVVLDPNNPIEGLKDSKKLTAARREYLYEQIMEKAKAWGVGEASPTEIDEINILQATMLAMRRAIEDLATRLGAWPDKALIDGNRCPELPIAAEAIIKGDTKEPAISAASIVAKVTRDRQMMSLHERHPEYGFAQHMGYPTEAHFAALKQYGACDQHRRCFSPVRKALESVAS.

Residues 4–197 (IWVCGVDEAG…VRKALESVAS (194 aa)) form the RNase H type-2 domain. 3 residues coordinate a divalent metal cation: D10, E11, and D106.

Belongs to the RNase HII family. Requires Mn(2+) as cofactor. Mg(2+) is required as a cofactor.

The protein resides in the cytoplasm. It carries out the reaction Endonucleolytic cleavage to 5'-phosphomonoester.. Functionally, endonuclease that specifically degrades the RNA of RNA-DNA hybrids. This is Ribonuclease HII from Polynucleobacter necessarius subsp. necessarius (strain STIR1).